The following is an 86-amino-acid chain: Toxin Td2 (86 aa).

The N-terminal stretch at 1–20 (MTRFVLFLNCFFLICMVVEC) is a signal peptide. Positions 21-83 (KEGYLMGADG…TWDRATNTCG (63 aa)) constitute an LCN-type CS-alpha/beta domain. Disulfide bonds link Cys-31-Cys-82, Cys-35-Cys-57, Cys-43-Cys-63, and Cys-47-Cys-65. At Arg-84 the chain carries Arginine amide.

Expressed by the venom gland.

The protein localises to the secreted. Beta toxins bind voltage-independently at site-4 of sodium channels (Nav) and shift the voltage of activation toward more negative potentials thereby affecting sodium channel activation and promoting spontaneous and repetitive firing. The protein is Toxin Td2 of Tityus discrepans (Venezuelan scorpion).